Here is a 184-residue protein sequence, read N- to C-terminus: UPF0398 protein BCG9842_B3730 (184 aa).

This sequence belongs to the UPF0398 family.

This chain is UPF0398 protein BCG9842_B3730, found in Bacillus cereus (strain G9842).